Consider the following 465-residue polypeptide: Juvenile hormone epoxide hydrolase 2 (465 aa).

The helical transmembrane segment at isoleucine 7–phenylalanine 27 threads the bilayer. Aspartate 224 serves as the catalytic Nucleophile. Tyrosine 370 (proton donor) is an active-site residue. Residue histidine 427 is the Proton acceptor of the active site.

This sequence belongs to the peptidase S33 family.

It is found in the microsome membrane. The protein resides in the endoplasmic reticulum membrane. It catalyses the reaction cis-stilbene oxide + H2O = (1R,2R)-hydrobenzoin. The catalysed reaction is 1-(4-methoxyphenyl)-N-methyl-N-[(3-methyloxetan-3-yl)methyl]methanamine + H2O = 2-{[(4-methoxybenzyl)(methyl)amino]methyl}-2-methylpropane-1,3-diol. Functionally, catalyzes juvenile hormone hydrolysis. The protein is Juvenile hormone epoxide hydrolase 2 of Ctenocephalides felis (Cat flea).